A 212-amino-acid polypeptide reads, in one-letter code: Riboflavin kinase (212 aa).

The tract at residues 1–83 (MTELYCERKT…NLLRYFDIAS (83 aa)) is unknown. The interval 84-212 (IKLVGRVVTG…GDRVELEVYL (129 aa)) is riboflavin kinase. Position 93-98 (93-98 (GLGEGA)) interacts with CDP. 2 residues coordinate Mg(2+): Thr122 and Asn124. Positions 179 and 187 each coordinate FMN. Residue 192–195 (VRVR) participates in CDP binding.

The protein belongs to the archaeal riboflavin kinase family. It depends on Mg(2+) as a cofactor.

The catalysed reaction is riboflavin + CTP = CDP + FMN + H(+). The protein operates within cofactor biosynthesis; FMN biosynthesis; FMN from riboflavin (CTP route): step 1/1. In terms of biological role, catalyzes the CTP-dependent phosphorylation of riboflavin (vitamin B2) to form flavin mononucleotide (FMN). This chain is Riboflavin kinase (ribK), found in Pyrobaculum calidifontis (strain DSM 21063 / JCM 11548 / VA1).